Here is a 111-residue protein sequence, read N- to C-terminus: Movement protein TGB2 (111 aa).

The Cytoplasmic segment spans residues 1-16 (MSSHQNFLTPPPDHSK). The chain crosses the membrane as a helical span at residues 17–37 (AILAVAVGVGLAIVLHFSLSY). The Lumenal portion of the chain corresponds to 38–72 (KLPSPGDNIHSLPFGGTYRDGTKSIIYNSPHRGPG). The chain crosses the membrane as a helical span at residues 73 to 93 (QSGALPIITVFAIIECTLHVL). The Cytoplasmic segment spans residues 94–111 (RKRDNPVRPQHSDCPNCS).

The protein belongs to the Tymovirales TGBp2 protein family.

Its subcellular location is the host endoplasmic reticulum membrane. Functionally, plays a role in viral cell-to-cell propagation, by facilitating genome transport to neighboring plant cells through plasmosdesmata,. The chain is Movement protein TGB2 from Carica papaya (Papaya).